Consider the following 107-residue polypeptide: U1-lycotoxin-Ls1d (107 aa).

Positions 1-20 (MMKVLVVVALLVTLISYSSS) are cleaved as a signal peptide. A propeptide spanning residues 21-41 (EGIDDLEADELLSLMANEQTR) is cleaved from the precursor. Cystine bridges form between Cys44–Cys59, Cys51–Cys68, Cys58–Cys86, and Cys70–Cys84.

It belongs to the neurotoxin 19 (CSTX) family. 04 (U1-Lctx) subfamily. As to expression, expressed by the venom gland.

The protein localises to the secreted. This chain is U1-lycotoxin-Ls1d, found in Lycosa singoriensis (Wolf spider).